Consider the following 130-residue polypeptide: Fumarate reductase subunit C (130 aa).

3 helical membrane-spanning segments follow: residues Val34–Val54, Phe60–Ala80, and Ile109–Leu129.

This sequence belongs to the FrdC family. In terms of assembly, part of an enzyme complex containing four subunits: a flavoprotein (FrdA), an iron-sulfur protein (FrdB), and two hydrophobic anchor proteins (FrdC and FrdD).

Its subcellular location is the cell inner membrane. Two distinct, membrane-bound, FAD-containing enzymes are responsible for the catalysis of fumarate and succinate interconversion; fumarate reductase is used in anaerobic growth, and succinate dehydrogenase is used in aerobic growth. Anchors the catalytic components of the fumarate reductase complex to the cell inner membrane, binds quinones. This is Fumarate reductase subunit C from Serratia proteamaculans (strain 568).